The chain runs to 475 residues: Exodeoxyribonuclease I (475 aa).

The Exonuclease domain occupies 13-192 (FHDYETFGTH…AMADVYATIA (180 aa)). Positions 15 and 17 each coordinate Mg(2+). Residues Glu-17 and Arg-165 each coordinate substrate. Residue Asp-186 coordinates Mg(2+). Residues 202–355 (PRLFDYLFTH…KVVAIFAEAE (154 aa)) form the ExoI SH3-like domain. Residues 358-475 (TPSDNVDAQL…ALWQYAEEIV (118 aa)) enclose the ExoI C-terminal domain.

Monomer. Interacts with ssb (via C-terminus); this interaction stimulates the exonuclease activity by recruiting the enzyme to its substrate. Mg(2+) is required as a cofactor.

The catalysed reaction is Exonucleolytic cleavage in the 3'- to 5'-direction to yield nucleoside 5'-phosphates.. Its activity is regulated as follows. Inhibited by 10 mM EDTA. Degrades single-stranded DNA (ssDNA) in a highly processive manner. Also functions as a DNA deoxyribophosphodiesterase that releases deoxyribose-phosphate moieties following the cleavage of DNA at an apurinic/apyrimidinic (AP) site by either an AP endonuclease or AP lyase. This Escherichia coli (strain K12) protein is Exodeoxyribonuclease I (sbcB).